The following is a 135-amino-acid chain: MLSPKRTRFRKQHRGRMKGISYRGNHISFGKYALQALEPAWITSRQIEAGRRAMTRNARRGGKIWVRIFPDKPVTVRPAETRMGSGKGSPEYWVAVVKPGRILYEMGGVTENIARKAISIASSKMPIRTQFIISA.

Belongs to the universal ribosomal protein uL16 family. As to quaternary structure, part of the 50S ribosomal subunit.

It is found in the plastid. The protein resides in the chloroplast. The polypeptide is Large ribosomal subunit protein uL16c (Panax ginseng (Korean ginseng)).